The chain runs to 771 residues: Carnitine O-palmitoyltransferase 1, muscle isoform (771 aa).

Topologically, residues 1–47 (MAEAHQAVAFQFTVTPEGVDFQLSREVLKHIYLSVIRSWKKRLIRIK) are cytoplasmic. A helical membrane pass occupies residues 48-73 (NGILRGVYPGSPTSWLVVVMATAGSS). Over 74–101 (YYNVDISMGLVYYIQRWLPEGRPYRTPY) the chain is Mitochondrial intermembrane. Residues 102–121 (TRTLFSMAIFSTGVWMMGIF) traverse the membrane as a helical segment. The Cytoplasmic segment spans residues 122–771 (FFRQTLKLLL…NLFQVPKADG (650 aa)). Residue H472 is the Proton acceptor of the active site. A CoA-binding site is contributed by 554-566 (GKGLIKKCRTSPD). 2 residues coordinate (R)-carnitine: Y588 and T601.

The protein belongs to the carnitine/choline acetyltransferase family.

The protein localises to the mitochondrion outer membrane. It catalyses the reaction (R)-carnitine + hexadecanoyl-CoA = O-hexadecanoyl-(R)-carnitine + CoA. It functions in the pathway lipid metabolism; fatty acid beta-oxidation. Its function is as follows. Catalyzes the transfer of the acyl group of long-chain fatty acid-CoA conjugates onto carnitine, an essential step for the mitochondrial uptake of long-chain fatty acids and their subsequent beta-oxidation in the mitochondrion. The chain is Carnitine O-palmitoyltransferase 1, muscle isoform (CPT1B) from Bos taurus (Bovine).